The chain runs to 238 residues: Probable 2-phosphosulfolactate phosphatase (238 aa).

It belongs to the ComB family. Mg(2+) serves as cofactor.

The enzyme catalyses (2R)-O-phospho-3-sulfolactate + H2O = (2R)-3-sulfolactate + phosphate. This chain is Probable 2-phosphosulfolactate phosphatase, found in Clostridium botulinum (strain Eklund 17B / Type B).